The sequence spans 173 residues: Skp-like protein (173 aa).

The first 19 residues, 1-19 (MKKFLLLSLMSLASSTVFA), serve as a signal peptide directing secretion.

The protein belongs to the Skp family.

The sequence is that of Skp-like protein from Chlamydia muridarum (strain MoPn / Nigg).